The sequence spans 228 residues: MPRDTKPYSRPANAPRPGVKTERSNQFKAASTKYGKRVNDANKETRPVAFVDIKLNHRATPEMEQRMQAVYARQKPSIFNKSAVAEFIKNRTFVVAFAHPTYTIQFNKIPTVDQLRVYCSNINKDLLFKDKNQQMRNALPNAASFRVQINDEPLFKVQTVVYDKESAQLVLTIRFLPRQTMELLPMKKCVVYLNILSNASVDWAVPADLLRAFAKLALAPPIPAPQNV.

The interval Met-1–Tyr-34 is disordered.

This is an uncharacterized protein from Orgyia pseudotsugata (Douglas-fir tussock moth).